The following is a 417-amino-acid chain: Calreticulin (417 aa).

A signal peptide spans 1-17 (MLLPVPLLLGLVGLAAA). Positions 18–197 (EPTIYFKEQF…NSQVESGSLE (180 aa)) are N-domain. Glutamine 26, lysine 62, and lysine 64 together coordinate Ca(2+). Lysine 64 is subject to N6-(2-hydroxyisobutyryl)lysine. Positions 109, 111, 128, and 135 each coordinate an alpha-D-glucoside. Cysteine 137 and cysteine 163 form a disulfide bridge. The residue at position 159 (lysine 159) is an N6-acetyllysine. One copy of the 1-1 repeat lies at 191 to 202 (VESGSLEDDWDF). Residues 191 to 255 (VESGSLEDDW…DAKKPEDWDE (65 aa)) are 4 X approximate repeats. The segment at 193–277 (SGSLEDDWDF…NPEYKGEWKP (85 aa)) is disordered. Residues 198 to 308 (DDWDFLPPKK…YSPDSNIYAY (111 aa)) are P-domain. Basic and acidic residues predominate over residues 207 to 251 (KIKDPDAVKPEDWDERAKIDDPTDSKPEDWDKPEHIPDPDAKKPE). Lysine 209 is modified (N6-acetyllysine). Repeat copies occupy residues 210 to 221 (DPDAVKPEDWDE), 227 to 238 (DPTDSKPEDWDK), 244 to 255 (DPDAKKPEDWDE), 259 to 269 (GEWEPPVIQNP), 273 to 283 (GEWKPRQIDNP), and 287 to 297 (GTWIHPEIDNP). The interaction with PPIB stretch occupies residues 237–270 (DKPEHIPDPDAKKPEDWDEEMDGEWEPPVIQNPE). The segment covering 252 to 261 (DWDEEMDGEW) has biased composition (acidic residues). A 3 X approximate repeats region spans residues 259 to 297 (GEWEPPVIQNPEYKGEWKPRQIDNPDYKGTWIHPEIDNP). A C-domain region spans residues 309–417 (ENFAVLGLDL…AAAGQAKDEL (109 aa)). An alpha-D-glucoside is bound at residue aspartate 317. Ca(2+) is bound at residue aspartate 328. Residues 350-417 (TKAAEKQMKD…AAAGQAKDEL (68 aa)) are disordered. Over residues 352 to 379 (AAEKQMKDKQDEEQRLKEEEEEKKRKEE) the composition is skewed to basic and acidic residues. The segment covering 380-408 (EEVDKEDEEDKDEDEEEEDEKEEEEEEDA) has biased composition (acidic residues). Residues 414–417 (KDEL) carry the Prevents secretion from ER motif.

It belongs to the calreticulin family. Monomer. Component of an EIF2 complex at least composed of CELF1/CUGBP1, CALR, CALR3, EIF2S1, EIF2S2, HSP90B1 and HSPA5. Interacts with PDIA3/ERp57 and SPACA9. Interacts with TRIM21. Interacts with NR3C1. Interacts with PPIB. Interacts (via P-domain) with PDIA5. Interacts with CLCC1. As to expression, in blastocyst expressed in all blastomeres (at protein level). In embryos, expressed in spleen, kidney, liver, fat, muscle, ovary, granulosa cells and cumulus cells.

Its subcellular location is the endoplasmic reticulum lumen. It localises to the cytoplasm. The protein localises to the cytosol. The protein resides in the secreted. It is found in the extracellular space. Its subcellular location is the extracellular matrix. It localises to the cell surface. The protein localises to the sarcoplasmic reticulum lumen. The protein resides in the cytoplasmic vesicle. It is found in the secretory vesicle. Its subcellular location is the cortical granule. It localises to the cytolytic granule. In terms of biological role, calcium-binding chaperone that promotes folding, oligomeric assembly and quality control in the endoplasmic reticulum (ER) via the calreticulin/calnexin cycle. This lectin interacts transiently with almost all of the monoglucosylated glycoproteins that are synthesized in the ER. Interacts with the DNA-binding domain of NR3C1 and mediates its nuclear export. Involved in maternal gene expression regulation. May participate in oocyte maturation via the regulation of calcium homeostasis. Present in the cortical granules of non-activated oocytes, is exocytosed during the cortical reaction in response to oocyte activation and might participate in the block to polyspermy. This Sus scrofa (Pig) protein is Calreticulin (CALR).